The sequence spans 301 residues: uncharacterized protein (301 aa).

Catalysis depends on charge relay system residues serine 44 and tyrosine 107. Tyrosine 133 (proton donor) is an active-site residue. Lysine 162 serves as the catalytic Schiff-base intermediate with substrate.

Belongs to the DapA family. As to quaternary structure, homotetramer.

The protein resides in the cytoplasm. This is an uncharacterized protein from Pyrobaculum neutrophilum (strain DSM 2338 / JCM 9278 / NBRC 100436 / V24Sta) (Thermoproteus neutrophilus).